A 249-amino-acid chain; its full sequence is Mediator of RNA polymerase II transcription subunit 8 (249 aa).

Positions 154–200 form a coiled coil; it reads LEEREMGIQNVVTGLRRQLEDEDEEASESEEEVEEEEMEVVGVRRRS. The disordered stretch occupies residues 170–249; the sequence is RQLEDEDEEA…MTTGIPPTQR (80 aa). The span at 173-192 shows a compositional bias: acidic residues; it reads EDEDEEASESEEEVEEEEME. Over residues 211-232 the composition is skewed to low complexity; sequence AAPAPGSRQQQQQQKAAGPAVP.

The protein belongs to the Mediator complex subunit 8 family. As to quaternary structure, component of the Mediator complex.

It localises to the nucleus. In terms of biological role, component of the Mediator complex, a coactivator involved in the regulated transcription of nearly all RNA polymerase II-dependent genes. Mediator functions as a bridge to convey information from gene-specific regulatory proteins to the basal RNA polymerase II transcription machinery. Mediator is recruited to promoters by direct interactions with regulatory proteins and serves as a scaffold for the assembly of a functional preinitiation complex with RNA polymerase II and the general transcription factors. The sequence is that of Mediator of RNA polymerase II transcription subunit 8 (med8) from Aspergillus fumigatus (strain ATCC MYA-4609 / CBS 101355 / FGSC A1100 / Af293) (Neosartorya fumigata).